A 191-amino-acid chain; its full sequence is Putative manganese efflux pump MntP (191 aa).

The next 6 membrane-spanning stretches (helical) occupy residues 3 to 23 (PISILLIGFAMSTDAFAAAIG), 37 to 57 (LRAGIIFGVIEAITPIIGWLL), 65 to 85 (VEAFDHWIAFGLLGALGIHMI), 107 to 129 (WKLALTGFATSIDAMAVGIGLAF), 144 to 164 (CTLTMVTVGIMLGRVLGSMVG), and 169 to 189 (IIGGVILVIIGATILYEHLHG).

This sequence belongs to the MntP (TC 9.B.29) family.

It localises to the cell inner membrane. Functionally, probably functions as a manganese efflux pump. The protein is Putative manganese efflux pump MntP of Stenotrophomonas maltophilia (strain R551-3).